We begin with the raw amino-acid sequence, 372 residues long: 4-hydroxy-3-methylbut-2-en-1-yl diphosphate synthase (flavodoxin) (372 aa).

The [4Fe-4S] cluster site is built by Cys-270, Cys-273, Cys-305, and Glu-312.

It belongs to the IspG family. [4Fe-4S] cluster serves as cofactor.

The catalysed reaction is (2E)-4-hydroxy-3-methylbut-2-enyl diphosphate + oxidized [flavodoxin] + H2O + 2 H(+) = 2-C-methyl-D-erythritol 2,4-cyclic diphosphate + reduced [flavodoxin]. It participates in isoprenoid biosynthesis; isopentenyl diphosphate biosynthesis via DXP pathway; isopentenyl diphosphate from 1-deoxy-D-xylulose 5-phosphate: step 5/6. Functionally, converts 2C-methyl-D-erythritol 2,4-cyclodiphosphate (ME-2,4cPP) into 1-hydroxy-2-methyl-2-(E)-butenyl 4-diphosphate. The sequence is that of 4-hydroxy-3-methylbut-2-en-1-yl diphosphate synthase (flavodoxin) from Vibrio campbellii (strain ATCC BAA-1116).